We begin with the raw amino-acid sequence, 107 residues long: Small ribosomal subunit protein uS17 (107 aa).

Belongs to the universal ribosomal protein uS17 family. As to quaternary structure, part of the 30S ribosomal subunit.

One of the primary rRNA binding proteins, it binds specifically to the 5'-end of 16S ribosomal RNA. In Nitrosopumilus maritimus (strain SCM1), this protein is Small ribosomal subunit protein uS17.